The chain runs to 452 residues: Cysteine--tRNA ligase (452 aa).

C27 serves as a coordination point for Zn(2+). The 'HIGH' region motif lies at P29–H39. Zn(2+)-binding residues include D207, H232, and E236. The short motif at K265 to S269 is the 'KMSKS' region element. K268 provides a ligand contact to ATP.

The protein belongs to the class-I aminoacyl-tRNA synthetase family. Requires Zn(2+) as cofactor.

It localises to the cytoplasm. The catalysed reaction is tRNA(Cys) + L-cysteine + ATP = L-cysteinyl-tRNA(Cys) + AMP + diphosphate. This Thermoplasma acidophilum (strain ATCC 25905 / DSM 1728 / JCM 9062 / NBRC 15155 / AMRC-C165) protein is Cysteine--tRNA ligase.